A 379-amino-acid polypeptide reads, in one-letter code: Citrate synthase (379 aa).

Residues H225, H265, and D316 contribute to the active site.

The protein belongs to the citrate synthase family. Homodimer.

It catalyses the reaction oxaloacetate + acetyl-CoA + H2O = citrate + CoA + H(+). Its pathway is carbohydrate metabolism; tricarboxylic acid cycle; isocitrate from oxaloacetate: step 1/2. Its function is as follows. Might regulate the synthesis and function of enzymes involved in later enzymatic steps of Krebs cycle. This is Citrate synthase (citZ) from Haloferax volcanii (strain ATCC 29605 / DSM 3757 / JCM 8879 / NBRC 14742 / NCIMB 2012 / VKM B-1768 / DS2) (Halobacterium volcanii).